The following is a 278-amino-acid chain: Sulfur carrier protein FdhD (278 aa).

Catalysis depends on cysteine 121, which acts as the Cysteine persulfide intermediate. 260 to 265 serves as a coordination point for Mo-bis(molybdopterin guanine dinucleotide); the sequence is FCKPGR.

It belongs to the FdhD family.

Its subcellular location is the cytoplasm. Functionally, required for formate dehydrogenase (FDH) activity. Acts as a sulfur carrier protein that transfers sulfur from IscS to the molybdenum cofactor prior to its insertion into FDH. The chain is Sulfur carrier protein FdhD from Salmonella typhi.